The sequence spans 157 residues: Endoribonuclease YbeY (157 aa).

3 residues coordinate Zn(2+): His115, His119, and His125.

It belongs to the endoribonuclease YbeY family. Zn(2+) is required as a cofactor.

The protein resides in the cytoplasm. Single strand-specific metallo-endoribonuclease involved in late-stage 70S ribosome quality control and in maturation of the 3' terminus of the 16S rRNA. The sequence is that of Endoribonuclease YbeY from Micrococcus luteus (strain ATCC 4698 / DSM 20030 / JCM 1464 / CCM 169 / CCUG 5858 / IAM 1056 / NBRC 3333 / NCIMB 9278 / NCTC 2665 / VKM Ac-2230) (Micrococcus lysodeikticus).